Reading from the N-terminus, the 285-residue chain is Nucleotide-binding protein Glov_2163 (285 aa).

8 to 15 (GMSGSGKS) contributes to the ATP binding site. A GTP-binding site is contributed by 59–62 (DIRG).

It belongs to the RapZ-like family.

Displays ATPase and GTPase activities. This chain is Nucleotide-binding protein Glov_2163, found in Trichlorobacter lovleyi (strain ATCC BAA-1151 / DSM 17278 / SZ) (Geobacter lovleyi).